The sequence spans 101 residues: Chaperone modulatory protein CbpM (101 aa).

The protein belongs to the CbpM family.

Its function is as follows. Interacts with CbpA and inhibits both the DnaJ-like co-chaperone activity and the DNA binding activity of CbpA. Together with CbpA, modulates the activity of the DnaK chaperone system. Does not inhibit the co-chaperone activity of DnaJ. The chain is Chaperone modulatory protein CbpM from Salmonella agona (strain SL483).